We begin with the raw amino-acid sequence, 513 residues long: ATP synthase subunit alpha (513 aa).

Gly170–Thr177 is a binding site for ATP.

This sequence belongs to the ATPase alpha/beta chains family. As to quaternary structure, F-type ATPases have 2 components, CF(1) - the catalytic core - and CF(0) - the membrane proton channel. CF(1) has five subunits: alpha(3), beta(3), gamma(1), delta(1), epsilon(1). CF(0) has four main subunits: a(1), b(1), b'(1) and c(9-12).

Its subcellular location is the cell inner membrane. It carries out the reaction ATP + H2O + 4 H(+)(in) = ADP + phosphate + 5 H(+)(out). In terms of biological role, produces ATP from ADP in the presence of a proton gradient across the membrane. The alpha chain is a regulatory subunit. The polypeptide is ATP synthase subunit alpha (Gloeobacter violaceus (strain ATCC 29082 / PCC 7421)).